Reading from the N-terminus, the 183-residue chain is DNA-directed RNA polymerase subunit Rpo7 (183 aa).

In terms of domain architecture, S1 motif spans His-82–Lys-164.

The protein belongs to the eukaryotic RPB7/RPC8 RNA polymerase subunit family. In terms of assembly, part of the 13-subunit RNA polymerase complex. Forms a stalk with Rpo4 that extends from the main structure.

It is found in the cytoplasm. It catalyses the reaction RNA(n) + a ribonucleoside 5'-triphosphate = RNA(n+1) + diphosphate. DNA-dependent RNA polymerase (RNAP) catalyzes the transcription of DNA into RNA using the four ribonucleoside triphosphates as substrates. Its function is as follows. Reconstitution experiments show this subunit is required for basic activity. The polypeptide is DNA-directed RNA polymerase subunit Rpo7 (Sulfolobus acidocaldarius (strain ATCC 33909 / DSM 639 / JCM 8929 / NBRC 15157 / NCIMB 11770)).